We begin with the raw amino-acid sequence, 1129 residues long: Kinesin-like protein KIP1 (1129 aa).

Residues 1-49 are disordered; sequence MLEQAEKLMKRNSSGAMSAPQSKPLARSRSSTMPTTTQKRVRSSQQSEG. Polar residues-rich tracts occupy residues 11–21 and 28–48; these read RNSSGAMSAPQ and SRSS…QQSE. Positions 54-417 constitute a Kinesin motor domain; the sequence is NIKVYVRCRS…LEYATRAKSI (364 aa). 139-146 provides a ligand contact to ATP; the sequence is GQTGTGKT. Coiled coils occupy residues 422-513, 681-765, and 919-948; these read QVNQ…ELDV, LEKE…QKIV, and DDQR…TLVN.

This sequence belongs to the TRAFAC class myosin-kinesin ATPase superfamily. Kinesin family. BimC subfamily.

The protein localises to the cytoplasm. It is found in the cytoskeleton. The protein resides in the spindle. Functionally, required for assembly of the mitotic spindle. Interacts with spindle microtubules to produce an outwardly directed force acting upon the poles. Following spindle assembly, CIN8 and KIP1 apparently act to oppose a force that draws separated poles back together. This force seems to be mediate by KAR3. In Eremothecium gossypii (strain ATCC 10895 / CBS 109.51 / FGSC 9923 / NRRL Y-1056) (Yeast), this protein is Kinesin-like protein KIP1 (KIP1).